The primary structure comprises 1054 residues: Kinesin-like protein KIN-7G (1054 aa).

In terms of domain architecture, Kinesin motor spans 17–341 (KIFVSVRLRP…LLFASCAKEV (325 aa)). ATP is bound at residue 105-112 (GQTSSGKT). Coiled coils occupy residues 350–425 (VMSD…IGEA) and 611–640 (TETAEEKEEKEETEEKEEEEEERVKEVSSV). Disordered regions lie at residues 600–648 (CEPE…KEKS) and 740–760 (ERAESNLKPSNSKRPPLPKHI). The span at 613 to 631 (TAEEKEEKEETEEKEEEEE) shows a compositional bias: acidic residues.

The protein belongs to the TRAFAC class myosin-kinesin ATPase superfamily. Kinesin family. KIN-7 subfamily.

The chain is Kinesin-like protein KIN-7G from Arabidopsis thaliana (Mouse-ear cress).